The following is a 441-amino-acid chain: Endoglucanase E-2 (441 aa).

Residues 1–31 constitute a signal peptide (tat-type signal); it reads MSPRPLRALLGAAAAALVSAAALAFPSQAAA. Positions 32-320 are catalytic; sequence NDSPFYVNPN…YEMAIAAGGT (289 aa). Residue Asp-110 is part of the active site. 2 disulfide bridges follow: Cys-111–Cys-156 and Cys-263–Cys-298. The active-site Proton donor is the Asp-148. The Nucleophile role is filled by Asp-296. The segment at 317 to 343 is disordered; it reads AGGTNPNPNPNPTPTPTPTPTPPPGSS. Positions 321–340 are linker; it reads NPNPNPNPTPTPTPTPTPPP. The span at 323–341 shows a compositional bias: pro residues; the sequence is NPNPNPTPTPTPTPTPPPG. Positions 339 to 441 constitute a CBM2 domain; that stretch reads PPGSSGACTA…SVPTLTCAAS (103 aa). Cys-346 and Cys-438 are oxidised to a cystine.

The protein belongs to the glycosyl hydrolase 6 (cellulase B) family. In terms of assembly, homodimer. In terms of processing, predicted to be exported by the Tat system. The position of the signal peptide cleavage has been experimentally proven.

It carries out the reaction Endohydrolysis of (1-&gt;4)-beta-D-glucosidic linkages in cellulose, lichenin and cereal beta-D-glucans.. It functions in the pathway glycan metabolism; cellulose degradation. This is Endoglucanase E-2 (celB) from Thermobifida fusca (Thermomonospora fusca).